Here is a 375-residue protein sequence, read N- to C-terminus: POU domain, class 3, transcription factor 1 (375 aa).

Disordered stretches follow at residues 1-29 (MAAT…RMHQ), 56-139 (MSLT…QPLI), and 151-200 (MLGP…PSSD). 3 stretches are compositionally biased toward polar residues: residues 107–117 (VHQQTPSSHAW), 130–139 (PGSNSHQPLI), and 151–160 (MLGPQASSLH). Residues 162 to 171 (SMRDPLHDDP) show a composition bias toward basic and acidic residues. Residues 194-268 (EDAPSSDDLE…LLNKWLEETD (75 aa)) enclose the POU-specific domain. The homeobox DNA-binding region spans 286-345 (KRKKRTSIEVGVKGALENHFLKCPKPSAHEITSLADSLQLEKEVVRVWFCNRRQKEKRMT).

Belongs to the POU transcription factor family. Class-3 subfamily.

It localises to the nucleus. In terms of biological role, acts as a transcription factor. May play a role in neuronal differentiation. In Xenopus tropicalis (Western clawed frog), this protein is POU domain, class 3, transcription factor 1.